A 61-amino-acid chain; its full sequence is Small ribosomal subunit protein uS14 (61 aa).

Zn(2+) is bound by residues Cys-24, Cys-27, Cys-40, and Cys-43.

Belongs to the universal ribosomal protein uS14 family. Zinc-binding uS14 subfamily. Part of the 30S ribosomal subunit. Contacts proteins S3 and S10. Zn(2+) serves as cofactor.

In terms of biological role, binds 16S rRNA, required for the assembly of 30S particles and may also be responsible for determining the conformation of the 16S rRNA at the A site. The chain is Small ribosomal subunit protein uS14 from Spiroplasma citri.